Here is a 572-residue protein sequence, read N- to C-terminus: Phosphoenolpyruvate-protein phosphotransferase (572 aa).

The active-site Tele-phosphohistidine intermediate is the histidine 191. Residues arginine 298 and arginine 334 each contribute to the phosphoenolpyruvate site. Residues glutamate 433 and aspartate 457 each contribute to the Mg(2+) site. Phosphoenolpyruvate contacts are provided by residues 456-457 (ND) and arginine 467. Residue cysteine 504 is the Proton donor of the active site.

Belongs to the PEP-utilizing enzyme family. As to quaternary structure, homodimer. Mg(2+) is required as a cofactor.

Its subcellular location is the cytoplasm. The catalysed reaction is L-histidyl-[protein] + phosphoenolpyruvate = N(pros)-phospho-L-histidyl-[protein] + pyruvate. In terms of biological role, general (non sugar-specific) component of the phosphoenolpyruvate-dependent sugar phosphotransferase system (sugar PTS). This major carbohydrate active-transport system catalyzes the phosphorylation of incoming sugar substrates concomitantly with their translocation across the cell membrane. Enzyme I transfers the phosphoryl group from phosphoenolpyruvate (PEP) to the phosphoryl carrier protein (HPr). The sequence is that of Phosphoenolpyruvate-protein phosphotransferase (ptsI) from Staphylococcus aureus (strain MRSA252).